We begin with the raw amino-acid sequence, 515 residues long: GMP synthase [glutamine-hydrolyzing] (515 aa).

The Glutamine amidotransferase type-1 domain occupies 6 to 198 (KVIILDFGSQ…VFKVAGLKAD (193 aa)). Cysteine 83 (nucleophile) is an active-site residue. Active-site residues include histidine 172 and glutamate 174. The region spanning 199–390 (WTMSSFVENC…LGLPEFIIWR (192 aa)) is the GMPS ATP-PPase domain. 226 to 232 (SGGIDST) is a binding site for ATP.

In terms of assembly, homodimer.

It catalyses the reaction XMP + L-glutamine + ATP + H2O = GMP + L-glutamate + AMP + diphosphate + 2 H(+). Its pathway is purine metabolism; GMP biosynthesis; GMP from XMP (L-Gln route): step 1/1. In terms of biological role, catalyzes the synthesis of GMP from XMP. The polypeptide is GMP synthase [glutamine-hydrolyzing] (Maridesulfovibrio salexigens (strain ATCC 14822 / DSM 2638 / NCIMB 8403 / VKM B-1763) (Desulfovibrio salexigens)).